The chain runs to 224 residues: Phosphoglycolate phosphatase (224 aa).

The Nucleophile role is filled by Asp10. The Mg(2+) site is built by Asp10, Asp12, and Asp176.

This sequence belongs to the HAD-like hydrolase superfamily. CbbY/CbbZ/Gph/YieH family. Requires Mg(2+) as cofactor.

It carries out the reaction 2-phosphoglycolate + H2O = glycolate + phosphate. Its pathway is organic acid metabolism; glycolate biosynthesis; glycolate from 2-phosphoglycolate: step 1/1. Functionally, specifically catalyzes the dephosphorylation of 2-phosphoglycolate. Is involved in the dissimilation of the intracellular 2-phosphoglycolate formed during the DNA repair of 3'-phosphoglycolate ends, a major class of DNA lesions induced by oxidative stress. The sequence is that of Phosphoglycolate phosphatase from Pasteurella multocida (strain Pm70).